Consider the following 374-residue polypeptide: uncharacterized protein (374 aa).

Positions 86–104 are enriched in low complexity; sequence RPAATAGTTPATGASGSAR. The tract at residues 86–109 is disordered; the sequence is RPAATAGTTPATGASGSARPTDAA. The Macro domain occupies 179 to 354; the sequence is WWRRSNTTRG…LQRVVFAVHG (176 aa).

This is an uncharacterized protein from Mycobacterium tuberculosis (strain CDC 1551 / Oshkosh).